A 428-amino-acid chain; its full sequence is Histone deacetylase 3 (428 aa).

The segment at asparagine 3–glutamate 316 is histone deacetylase. 1D-myo-inositol 1,4,5,6-tetrakisphosphate-binding residues include histidine 17, glycine 21, and lysine 25. Histidine 135 is an active-site residue. Aspartate 170, histidine 172, and aspartate 259 together coordinate Zn(2+). Residue arginine 265 coordinates 1D-myo-inositol 1,4,5,6-tetrakisphosphate. Residues leucine 385 to isoleucine 428 form a disordered region. Composition is skewed to basic and acidic residues over residues asparagine 386–threonine 405 and aspartate 415–isoleucine 428.

This sequence belongs to the histone deacetylase family. HD type 1 subfamily.

It is found in the nucleus. It localises to the chromosome. Its subcellular location is the cytoplasm. The protein resides in the cytosol. The enzyme catalyses N(6)-acetyl-L-lysyl-[histone] + H2O = L-lysyl-[histone] + acetate. Its activity is regulated as follows. Inositol tetraphosphate (1D-myo-inositol 1,4,5,6-tetrakisphosphate) promotes the histone deacetylase activity by acting as an intermolecular glue between hdac3 and N-Cor repressor complex components. Its function is as follows. Responsible for the deacetylation of lysine residues on the N-terminal part of the core histones (H2A, H2B, H3 and H4). Histone deacetylation gives a tag for epigenetic repression and plays an important role in transcriptional regulation, cell cycle progression and developmental events. Histone deacetylases act via the formation of large multiprotein complexes, such as N-Cor repressor complex, which activate the histone deacetylase activity. May play a role in the regulation of the circadian clock in a deacetylase activity-independent manner. The sequence is that of Histone deacetylase 3 (hdac3) from Tetraodon nigroviridis (Spotted green pufferfish).